The primary structure comprises 106 residues: UPF0145 protein Tlet_1264 (106 aa).

This sequence belongs to the UPF0145 family.

The protein is UPF0145 protein Tlet_1264 of Pseudothermotoga lettingae (strain ATCC BAA-301 / DSM 14385 / NBRC 107922 / TMO) (Thermotoga lettingae).